The following is a 598-amino-acid chain: Elongation factor 4 (598 aa).

Positions 2–183 (KKIRNFCIIA…AIIEKIPPPK (182 aa)) constitute a tr-type G domain. Residues 14 to 19 (DHGKST) and 130 to 133 (NKVD) contribute to the GTP site.

It belongs to the TRAFAC class translation factor GTPase superfamily. Classic translation factor GTPase family. LepA subfamily.

It localises to the cell inner membrane. It carries out the reaction GTP + H2O = GDP + phosphate + H(+). Functionally, required for accurate and efficient protein synthesis under certain stress conditions. May act as a fidelity factor of the translation reaction, by catalyzing a one-codon backward translocation of tRNAs on improperly translocated ribosomes. Back-translocation proceeds from a post-translocation (POST) complex to a pre-translocation (PRE) complex, thus giving elongation factor G a second chance to translocate the tRNAs correctly. Binds to ribosomes in a GTP-dependent manner. The chain is Elongation factor 4 from Flavobacterium johnsoniae (strain ATCC 17061 / DSM 2064 / JCM 8514 / BCRC 14874 / CCUG 350202 / NBRC 14942 / NCIMB 11054 / UW101) (Cytophaga johnsonae).